A 116-amino-acid chain; its full sequence is Ribonuclease P protein component (116 aa).

The protein belongs to the RnpA family. In terms of assembly, consists of a catalytic RNA component (M1 or rnpB) and a protein subunit.

The enzyme catalyses Endonucleolytic cleavage of RNA, removing 5'-extranucleotides from tRNA precursor.. Functionally, RNaseP catalyzes the removal of the 5'-leader sequence from pre-tRNA to produce the mature 5'-terminus. It can also cleave other RNA substrates such as 4.5S RNA. The protein component plays an auxiliary but essential role in vivo by binding to the 5'-leader sequence and broadening the substrate specificity of the ribozyme. The sequence is that of Ribonuclease P protein component from Gluconacetobacter diazotrophicus (strain ATCC 49037 / DSM 5601 / CCUG 37298 / CIP 103539 / LMG 7603 / PAl5).